The chain runs to 366 residues: Chorismate synthase (366 aa).

R48 contributes to the NADP(+) binding site. FMN is bound by residues 125–127, G283, 298–302, and R324; these read RSS and KPTPS.

It belongs to the chorismate synthase family. As to quaternary structure, homotetramer. The cofactor is FMNH2.

The enzyme catalyses 5-O-(1-carboxyvinyl)-3-phosphoshikimate = chorismate + phosphate. It functions in the pathway metabolic intermediate biosynthesis; chorismate biosynthesis; chorismate from D-erythrose 4-phosphate and phosphoenolpyruvate: step 7/7. Functionally, catalyzes the anti-1,4-elimination of the C-3 phosphate and the C-6 proR hydrogen from 5-enolpyruvylshikimate-3-phosphate (EPSP) to yield chorismate, which is the branch point compound that serves as the starting substrate for the three terminal pathways of aromatic amino acid biosynthesis. This reaction introduces a second double bond into the aromatic ring system. The protein is Chorismate synthase of Lachnospira eligens (strain ATCC 27750 / DSM 3376 / VPI C15-48 / C15-B4) (Eubacterium eligens).